A 263-amino-acid polypeptide reads, in one-letter code: Putative aliphatic sulfonates transport permease protein SsuC (263 aa).

The Cytoplasmic portion of the chain corresponds to 1 to 13 (MATPVKKWLLRVA). The helical transmembrane segment at 14–34 (PWFLPVGIVAVWQLASSVGWL) threads the bilayer. The Periplasmic portion of the chain corresponds to 35–43 (STRILPSPE). A helical membrane pass occupies residues 44 to 64 (GVVTAFWTLSASGELWQHLAI). In terms of domain architecture, ABC transmembrane type-1 spans 58–242 (LWQHLAISSW…LLGKLADVSA (185 aa)). The Cytoplasmic portion of the chain corresponds to 65–68 (SSWR). A helical membrane pass occupies residues 69–89 (ALIGFSIGGSLGLILGLISGL). Residues 90-102 (SRWGERLLDTSIQ) are Periplasmic-facing. The helical transmembrane segment at 103-122 (MLRNVPHLALIPLVILWFGI) threads the bilayer. Residues 123 to 125 (DES) are Cytoplasmic-facing. Residues 126-148 (AKIFLVALGTLFPIYINTWHGIR) traverse the membrane as a helical segment. The Periplasmic segment spans residues 149 to 164 (NIDRGLVEMARSYGLS). Residues 165–185 (GIPLFIHVILPGALPSIMVGV) form a helical membrane-spanning segment. Residues 186–187 (RF) are Cytoplasmic-facing. The helical transmembrane segment at 188–208 (ALGLMWLTLIVAETISANSGI) threads the bilayer. Residues 209-217 (GYLAMNARE) lie on the Periplasmic side of the membrane. A helical membrane pass occupies residues 218–238 (FLQTDVVVVAIILYALLGKLA). Residues 239–263 (DVSAQLLERLWLRWNPAYHLKEATV) lie on the Cytoplasmic side of the membrane.

It belongs to the binding-protein-dependent transport system permease family. CysTW subfamily.

The protein localises to the cell inner membrane. Part of a binding-protein-dependent transport system for aliphatic sulfonates. Probably responsible for the translocation of the substrate across the membrane. The chain is Putative aliphatic sulfonates transport permease protein SsuC (ssuC) from Escherichia coli (strain K12).